The primary structure comprises 654 residues: MEVQTECSEPPPCDPQPPGKLNKAAFKLFGKRKSGSSMPSIFSVRNKGESTGKAAGKTLELVRSKTHDGLITDTPSELDSHRKEESASSDQLHAGTPDGVSTAPLRSSITKSFSFFSLLRRSSSRAGDGTTTVGRRGRGLKGLFSSMRWRRKPQIQEDTLEVAKEVKEGDLILSSSSGSVKTEKDMTLTLEPLPQVFEESPLPGDSDKWKVASMQGIQGTNEVECGNCGPSVSQQHTVTEESPAPSPLRVQTGGLQNHKHSSSTHLSSIPTCALTPPMEHSTADPQSEQSVDRLCSMFTDVTSLKSFDSLTGCGDIIADPEEDSGNGGSATSSGTGSSSGGCMGRRLSGAGTNSERCSPAKPPLPPQVSSLASIHASCYMPAHQRPRAAPKKPQGSGVVAYMGGGEEMASPEGVDDADMQGLWHMLPQKDEDSPAPRRAEPVLHHAPARLEKRPPQVKALGLSKIPVSGSSKTGKQQPSRPSPPPVDKELQDAPPSDEGYWDSPTPGPEDEDSTFLRRDGLLRDSCSGDALYDLYDPDSPSAAGSDDDASSPTKSAGDLKMNLPSPKCSSSATSSFRSMKGSTSLPRDSKIPISVRQTPPSHSSSQGALSSNLSPTSTTPPKKTDAPPRTKIPVSKVPVRRSGGKSTSTSQSRK.

Disordered stretches follow at residues 1 to 105 (MEVQ…TAPL), 224 to 289 (ECGN…QSEQ), 316 to 369 (IIAD…PQVS), and 381 to 654 (PAHQ…QSRK). Residues 9–18 (EPPPCDPQPP) show a composition bias toward pro residues. Basic and acidic residues predominate over residues 60 to 70 (ELVRSKTHDGL). The segment covering 427 to 454 (PQKDEDSPAPRRAEPVLHHAPARLEKRP) has biased composition (basic and acidic residues). Residues 468-479 (SGSSKTGKQQPS) show a composition bias toward polar residues. The segment covering 565–575 (SPKCSSSATSS) has biased composition (low complexity). Over residues 576-586 (FRSMKGSTSLP) the composition is skewed to polar residues. Positions 601 to 621 (SHSSSQGALSSNLSPTSTTPP) are enriched in low complexity. A compositionally biased stretch (polar residues) spans 644 to 654 (GKSTSTSQSRK).

The protein belongs to the Amer family.

The protein localises to the cell membrane. Functionally, negative regulator of the canonical Wnt signaling pathway involved in neuroectodermal patterning. Acts by specifically binding phosphatidylinositol 4,5-bisphosphate (PtdIns(4,5)P2), translocating to the cell membrane and interacting with key regulators of the canonical Wnt signaling pathway, such as components of the beta-catenin destruction complex. The polypeptide is APC membrane recruitment protein 2 (amer2) (Danio rerio (Zebrafish)).